The sequence spans 379 residues: Cytochrome b (379 aa).

Helical transmembrane passes span 33–53, 77–98, 113–133, and 178–198; these read FGSL…FLAM, WLIR…YLHI, WNIG…GYVL, and FFTF…LHLL. His-83 and His-97 together coordinate heme b. Residues His-182 and His-196 each contribute to the heme b site. His-201 contributes to the a ubiquinone binding site. Helical transmembrane passes span 226-246, 288-308, 320-340, and 347-367; these read YKDL…VLFS, LGGV…PLLH, FSQT…WIGG, and FIII…VVMP.

Belongs to the cytochrome b family. The cytochrome bc1 complex contains 3 respiratory subunits (MT-CYB, CYC1 and UQCRFS1), 2 core proteins (UQCRC1 and UQCRC2) and probably 6 low-molecular weight proteins. Heme b serves as cofactor.

It is found in the mitochondrion inner membrane. Functionally, component of the ubiquinol-cytochrome c reductase complex (complex III or cytochrome b-c1 complex) that is part of the mitochondrial respiratory chain. The b-c1 complex mediates electron transfer from ubiquinol to cytochrome c. Contributes to the generation of a proton gradient across the mitochondrial membrane that is then used for ATP synthesis. The sequence is that of Cytochrome b (MT-CYB) from Iguana iguana (Common iguana).